We begin with the raw amino-acid sequence, 252 residues long: Hydroxyacylglutathione hydrolase (252 aa).

Residues His-54, His-56, Asp-58, His-59, His-111, Asp-128, and His-166 each contribute to the Zn(2+) site.

It belongs to the metallo-beta-lactamase superfamily. Glyoxalase II family. As to quaternary structure, monomer. It depends on Zn(2+) as a cofactor.

It carries out the reaction an S-(2-hydroxyacyl)glutathione + H2O = a 2-hydroxy carboxylate + glutathione + H(+). The protein operates within secondary metabolite metabolism; methylglyoxal degradation; (R)-lactate from methylglyoxal: step 2/2. Functionally, thiolesterase that catalyzes the hydrolysis of S-D-lactoyl-glutathione to form glutathione and D-lactic acid. This Vibrio cholerae serotype O1 (strain ATCC 39541 / Classical Ogawa 395 / O395) protein is Hydroxyacylglutathione hydrolase.